Reading from the N-terminus, the 476-residue chain is UDP-N-acetylmuramate--L-alanine ligase (476 aa).

Residue Gly-125–Thr-131 coordinates ATP.

The protein belongs to the MurCDEF family.

It localises to the cytoplasm. The catalysed reaction is UDP-N-acetyl-alpha-D-muramate + L-alanine + ATP = UDP-N-acetyl-alpha-D-muramoyl-L-alanine + ADP + phosphate + H(+). It functions in the pathway cell wall biogenesis; peptidoglycan biosynthesis. Cell wall formation. The polypeptide is UDP-N-acetylmuramate--L-alanine ligase (Histophilus somni (strain 129Pt) (Haemophilus somnus)).